A 238-amino-acid chain; its full sequence is IkB-like protein (238 aa).

ANK repeat units follow at residues 48–80 (GSSV…IINH), 87–118 (GNSA…TRIC), 124–153 (GMTP…PTQK), and 158–187 (GFTA…PLYM). Residues 80 to 86 (HHRRDND) carry the Nuclear localization signal motif. The Nuclear localization signal signature appears at 202–213 (KKKPKIIITGCK). The PxIxITxC motif; Interaction with host PPP3CA motif lies at 205–212 (PKIIITGC). The FLCV motif signature appears at 227 to 230 (FLCV).

It belongs to the asfivirus A238L family. In terms of assembly, interacts with host PPIA. Interacts with host PPP3CA/Calcineurin. Interacts with host RELA/p65; interaction of the 32 kDa form with host RELA results in the formation of a stable complex with NF-kappa-B. Interacts with host PPP3R1. Interacts with host EP300; this interaction inhibits the association of host EP300 with host RELA, JUN and NFATC2. Post-translationally, the protein exists in a 28 kDa and a 32 kDa form, probably due to post-translational modifications which are neither phosphorylation, nor sumoylation.

The protein localises to the host nucleus. Its subcellular location is the host cytoplasm. Its function is as follows. IkB-like protein that inhibits the binding of NF-kappa-B to DNA, thereby downregulating pro-inflammatory cytokine production. Forms a heterodimer with the NF-kappa-B subunit RELA/p65 and prevents the activation of the NF-kappa-B transcription factor. Inhibits calcineurin function, which is required for the induction of nuclear factor of activated T cells (NFAT)-dependent immune response genes. Prevents the binding of substrates to calcineurin without affecting the phosphatase activity. Does not contain the serine residues that are phosphorylated by host IkB kinase and thus is not degraded following stimulation of the NFkB pathway. This is IkB-like protein (A238L) from Ornithodoros (relapsing fever ticks).